Here is a 1224-residue protein sequence, read N- to C-terminus: ATP-dependent helicase/nuclease subunit A (1224 aa).

Residues 15–480 (VIWTDAQWQS…IDLSQNFRSR (466 aa)) form the UvrD-like helicase ATP-binding domain. Residue 36-43 (AAAGSGKT) coordinates ATP. Residues 497 to 791 (EQVGEISYDD…RMMTIHSSKG (295 aa)) enclose the UvrD-like helicase C-terminal domain.

This sequence belongs to the helicase family. AddA subfamily. As to quaternary structure, heterodimer of AddA and AddB/RexB. Requires Mg(2+) as cofactor.

The enzyme catalyses Couples ATP hydrolysis with the unwinding of duplex DNA by translocating in the 3'-5' direction.. The catalysed reaction is ATP + H2O = ADP + phosphate + H(+). Its function is as follows. The heterodimer acts as both an ATP-dependent DNA helicase and an ATP-dependent, dual-direction single-stranded exonuclease. Recognizes the chi site generating a DNA molecule suitable for the initiation of homologous recombination. The AddA nuclease domain is required for chi fragment generation; this subunit has the helicase and 3' -&gt; 5' nuclease activities. The sequence is that of ATP-dependent helicase/nuclease subunit A from Staphylococcus epidermidis (strain ATCC 12228 / FDA PCI 1200).